We begin with the raw amino-acid sequence, 198 residues long: Transcription antitermination protein NusB (198 aa).

Belongs to the NusB family.

Involved in transcription antitermination. Required for transcription of ribosomal RNA (rRNA) genes. Binds specifically to the boxA antiterminator sequence of the ribosomal RNA (rrn) operons. This chain is Transcription antitermination protein NusB, found in Methylococcus capsulatus (strain ATCC 33009 / NCIMB 11132 / Bath).